The sequence spans 172 residues: Cytochrome b6-f complex iron-sulfur subunit (172 aa).

A helical membrane pass occupies residues V17–V39. The Rieske domain maps to G61–F161. [2Fe-2S] cluster-binding residues include C107, H109, C125, and H128. C112 and C127 form a disulfide bridge.

It belongs to the Rieske iron-sulfur protein family. The 4 large subunits of the cytochrome b6-f complex are cytochrome b6, subunit IV (17 kDa polypeptide, PetD), cytochrome f and the Rieske protein, while the 4 small subunits are PetG, PetL, PetM and PetN. The complex functions as a dimer. [2Fe-2S] cluster serves as cofactor.

The protein localises to the cellular thylakoid membrane. The enzyme catalyses 2 oxidized [plastocyanin] + a plastoquinol + 2 H(+)(in) = 2 reduced [plastocyanin] + a plastoquinone + 4 H(+)(out). In terms of biological role, component of the cytochrome b6-f complex, which mediates electron transfer between photosystem II (PSII) and photosystem I (PSI), cyclic electron flow around PSI, and state transitions. The protein is Cytochrome b6-f complex iron-sulfur subunit of Synechococcus sp. (strain JA-3-3Ab) (Cyanobacteria bacterium Yellowstone A-Prime).